We begin with the raw amino-acid sequence, 498 residues long: Glycerol kinase (498 aa).

Thr14 is an ADP binding site. Residues Thr14, Thr15, and Ser16 each contribute to the ATP site. Thr14 contacts sn-glycerol 3-phosphate. Residue Arg18 participates in ADP binding. Residues Arg84, Glu85, Tyr136, and Asp243 each coordinate sn-glycerol 3-phosphate. Residues Arg84, Glu85, Tyr136, Asp243, and Gln244 each contribute to the glycerol site. The ADP site is built by Thr265 and Gly308. The ATP site is built by Thr265, Gly308, Gln312, and Gly409. The ADP site is built by Gly409 and Asn413.

This sequence belongs to the FGGY kinase family.

It carries out the reaction glycerol + ATP = sn-glycerol 3-phosphate + ADP + H(+). The protein operates within polyol metabolism; glycerol degradation via glycerol kinase pathway; sn-glycerol 3-phosphate from glycerol: step 1/1. Its activity is regulated as follows. Inhibited by fructose 1,6-bisphosphate (FBP). In terms of biological role, key enzyme in the regulation of glycerol uptake and metabolism. Catalyzes the phosphorylation of glycerol to yield sn-glycerol 3-phosphate. The sequence is that of Glycerol kinase from Shewanella frigidimarina (strain NCIMB 400).